Here is a 176-residue protein sequence, read N- to C-terminus: Thiol-disulfide oxidoreductase ResA (176 aa).

Residues 11 to 30 traverse the membrane as a helical; Signal-anchor for type II membrane protein segment; the sequence is LSILAVISVALGYTFYSNFF. Residues 36-176 enclose the Thioredoxin domain; it reads ARAGEQAVNF…EFMELIKPEA (141 aa). Cys74 and Cys77 form a disulfide bridge.

It belongs to the thioredoxin family. ResA subfamily.

It localises to the cell membrane. It functions in the pathway protein modification; cytochrome c assembly. Thiol-disulfide oxidoreductase which is required in disulfide reduction during c-type cytochrome synthesis. May accept reducing equivalents from CcdA, leading to breakage of disulfide bonds in apocytochrome c; following this reduction heme can be covalently attached. The polypeptide is Thiol-disulfide oxidoreductase ResA (Halalkalibacterium halodurans (strain ATCC BAA-125 / DSM 18197 / FERM 7344 / JCM 9153 / C-125) (Bacillus halodurans)).